Here is a 341-residue protein sequence, read N- to C-terminus: MAAQMREPKVVVLGGGSWGTTVASICARRGPTLQWVRSRETADDINENHRNSRYLGNDVVLSDTLRATTDFCEAANTADVVVMGVPSHGFRGVLTELARELRPWVPVVSLVKGLEQGTNMRMSQIVEEVLPGHPAGILAGPNIAREVAEGYAAAAVLAMPDQHLATRLSGLFRTRRFRVYTTDDVVGAEMAGALKNVFAIAVGMGYSLGIGENTRALVIARALREMTKLGVAMGGSPDTFPGLAGLGDLIVTCTSQRSRNRHVGEQLGAGKPIDEIIASMNQVAEGVKAASVIMEFANEFGLTMPIAREVDAVINHGSTVEQAYRGLIAEVPGHEVHGSGF.

Residues serine 17, tryptophan 18, arginine 37, and lysine 112 each coordinate NADPH. Residues lysine 112 and glycine 140 each contribute to the sn-glycerol 3-phosphate site. Alanine 144 contacts NADPH. Sn-glycerol 3-phosphate contacts are provided by lysine 195, aspartate 248, serine 258, arginine 259, and asparagine 260. The active-site Proton acceptor is lysine 195. Arginine 259 serves as a coordination point for NADPH. Valine 283 and glutamate 285 together coordinate NADPH.

Belongs to the NAD-dependent glycerol-3-phosphate dehydrogenase family.

Its subcellular location is the cytoplasm. It carries out the reaction sn-glycerol 3-phosphate + NAD(+) = dihydroxyacetone phosphate + NADH + H(+). It catalyses the reaction sn-glycerol 3-phosphate + NADP(+) = dihydroxyacetone phosphate + NADPH + H(+). The protein operates within membrane lipid metabolism; glycerophospholipid metabolism. Catalyzes the reduction of the glycolytic intermediate dihydroxyacetone phosphate (DHAP) to sn-glycerol 3-phosphate (G3P), the key precursor for phospholipid synthesis. This is Glycerol-3-phosphate dehydrogenase [NAD(P)+] from Mycobacterium avium (strain 104).